A 469-amino-acid polypeptide reads, in one-letter code: Soluble pyridine nucleotide transhydrogenase (469 aa).

Glu-39–Cys-48 is a binding site for FAD.

It belongs to the class-I pyridine nucleotide-disulfide oxidoreductase family. FAD serves as cofactor.

It localises to the cytoplasm. The catalysed reaction is NAD(+) + NADPH = NADH + NADP(+). In terms of biological role, conversion of NADPH, generated by peripheral catabolic pathways, to NADH, which can enter the respiratory chain for energy generation. In Photobacterium profundum (strain SS9), this protein is Soluble pyridine nucleotide transhydrogenase.